The chain runs to 191 residues: MLLSDRDIRAELASGRVTIDPFDPAMIQPSSIDVRLDKYFRVFENHRYPHIDPAVEQPDLTRLVETEGDEPFILHPGEFVLASTYEVIALPDDLAGRLEGKSSLGRLGLLTHSTAGWIDPGFTGHVTLELSNVATLPIKLWPGMKIGQLCLFRTSSPAEHPYGSPVYGSRYQGQRGPTPSRSWQNFHRTKI.

DCTP contacts are provided by residues 101–106 (KSSLGR), aspartate 119, 127–129 (TLE), glutamine 148, tyrosine 162, and glutamine 174. The Proton donor/acceptor role is filled by glutamate 129. The interval 163 to 191 (GSPVYGSRYQGQRGPTPSRSWQNFHRTKI) is disordered. Polar residues predominate over residues 171–191 (YQGQRGPTPSRSWQNFHRTKI).

It belongs to the dCTP deaminase family. Homotrimer.

It carries out the reaction dCTP + 2 H2O = dUMP + NH4(+) + diphosphate. It participates in pyrimidine metabolism; dUMP biosynthesis; dUMP from dCTP: step 1/1. In terms of biological role, bifunctional enzyme that catalyzes both the deamination of dCTP to dUTP and the hydrolysis of dUTP to dUMP without releasing the toxic dUTP intermediate. The chain is dCTP deaminase, dUMP-forming from Acidothermus cellulolyticus (strain ATCC 43068 / DSM 8971 / 11B).